The sequence spans 93 residues: Cell division protein FtsB (93 aa).

The Cytoplasmic portion of the chain corresponds to 1–3 (MRV). Residues 4-21 (TLVVLLALFLALQYRLWF) traverse the membrane as a helical segment. Topologically, residues 22 to 93 (GKNSLPDYWR…FFRLVPDRNP (72 aa)) are periplasmic. Residues 28 to 75 (DYWRLQQEVSNQKNTNENLERRNQLIYADIEDLREGEDALEERARNEL) adopt a coiled-coil conformation.

This sequence belongs to the FtsB family. In terms of assembly, part of a complex composed of FtsB, FtsL and FtsQ.

The protein resides in the cell inner membrane. Its function is as follows. Essential cell division protein. May link together the upstream cell division proteins, which are predominantly cytoplasmic, with the downstream cell division proteins, which are predominantly periplasmic. This chain is Cell division protein FtsB, found in Idiomarina loihiensis (strain ATCC BAA-735 / DSM 15497 / L2-TR).